The chain runs to 413 residues: Precorrin-6Y C(5,15)-methyltransferase [decarboxylating] (413 aa).

The protein belongs to the precorrin methyltransferase family.

The enzyme catalyses precorrin-6B + 2 S-adenosyl-L-methionine = precorrin-8X + 2 S-adenosyl-L-homocysteine + CO2 + 3 H(+). It functions in the pathway cofactor biosynthesis; adenosylcobalamin biosynthesis; cob(II)yrinate a,c-diamide from precorrin-2 (aerobic route): step 7/10. Catalyzes the methylation of both C-5 and C-15 in precorrin-6Y to form precorrin-8X. In Sinorhizobium sp, this protein is Precorrin-6Y C(5,15)-methyltransferase [decarboxylating] (cobL).